Consider the following 159-residue polypeptide: Succinate dehydrogenase assembly factor 2, mitochondrial (159 aa).

The transit peptide at 1–14 (MASFCLSRCCALRG) directs the protein to the mitochondrion.

This sequence belongs to the SDHAF2 family. As to quaternary structure, interacts with the flavoprotein subunit within the SDH catalytic dimer.

It localises to the mitochondrion matrix. Plays an essential role in the assembly of succinate dehydrogenase (SDH), an enzyme complex (also referred to as respiratory complex II) that is a component of both the tricarboxylic acid (TCA) cycle and the mitochondrial electron transport chain, and which couples the oxidation of succinate to fumarate with the reduction of ubiquinone (coenzyme Q) to ubiquinol. Required for flavinylation (covalent attachment of FAD) of the flavoprotein subunit of the SDH catalytic dimer. The sequence is that of Succinate dehydrogenase assembly factor 2, mitochondrial from Culex quinquefasciatus (Southern house mosquito).